Reading from the N-terminus, the 172-residue chain is Histone H1-like protein HC2 (172 aa).

The disordered stretch occupies residues 1–77 (MIGAQKKQSG…TVAKKPAVKK (77 aa)). The span at 8–77 (QSGKKTASRA…TVAKKPAVKK (70 aa)) shows a compositional bias: basic residues.

It belongs to the histone H1/H5 family. HCT subfamily.

In terms of biological role, might have a role in establishing the nucleoid structure of elementary bodies. The chain is Histone H1-like protein HC2 (hctB) from Chlamydia pneumoniae (Chlamydophila pneumoniae).